The chain runs to 272 residues: L-aspartate dehydrogenase (272 aa).

NAD(+) is bound by residues Ala-125 and Asn-192. The active site involves His-222.

This sequence belongs to the L-aspartate dehydrogenase family.

It catalyses the reaction L-aspartate + NADP(+) + H2O = oxaloacetate + NH4(+) + NADPH + H(+). It carries out the reaction L-aspartate + NAD(+) + H2O = oxaloacetate + NH4(+) + NADH + H(+). It participates in cofactor biosynthesis; NAD(+) biosynthesis; iminoaspartate from L-aspartate (dehydrogenase route): step 1/1. In terms of biological role, specifically catalyzes the NAD or NADP-dependent dehydrogenation of L-aspartate to iminoaspartate. The polypeptide is L-aspartate dehydrogenase (Nitrosopumilus maritimus (strain SCM1)).